A 163-amino-acid polypeptide reads, in one-letter code: uncharacterized protein (163 aa).

It belongs to the ycf51 family.

It is found in the plastid. It localises to the cyanelle. This is an uncharacterized protein from Cyanophora paradoxa.